Reading from the N-terminus, the 693-residue chain is MNTAITATTPTEYSYNDRYINRELSILDFHLRVLEQAVDPLHPLLERMNFLLIFSRNLDEFFEIRVAGVMEQFALGNESRSPDGLTPRQVLQKISETAHAAIERQYRILNEEILPKLREEDICFLRRGELTPAQSAWVKKYFQEQVAPVLTPISLDPAHPFPRLVNKSLNFIVTLEGKDAFGRQIDLAVVPAPRSLPRVVRLPDELTGGKEHHVMLSAIIHEHVSDLFPGMTATGCYQFRVTRNADLALNEDVEDLAKALKGELSSRRFGRAVRLEVTQNCPQHIYEYLLEEFDLNEEQLYKVDGPVNLARLVSNFKRPHLRYDSHTPVVPKVFKKTESIFSAMQKQDILLHHPFESFAPVIQLLREAARDPQVLAIKQTLYRSGADSEIVQVLAEAARNGKEVTAVIELRARFDEESNIEVANVLQEAGAVVVYGIVGYKTHAKMIMVVRRENNKLVRYVHLGTGNYHAMNARIYTDYGLMTTDKDLCEDVHRIFQELTGMGKMAKLKKLLHAPFTLHAQLINFIDEEIANAKAGRKAQIIVKVNALTEVQLINKLYEASQAGVQVDLIIRYDLLFTSGITKFIGKHSGTFNCRTVSFEHTRVYYFSNNGDARIYCSSADWMDRNLFNRVEACFPIEDPALKKRIYQQGLLNYLQDNQQAWLLQGDGTWVRAQPAAGEKLHNAQRELLETFK.

Asn-57 is an ATP binding site. Residues Arg-383 and Arg-413 each contribute to the Mg(2+) site. His-443 serves as the catalytic Phosphohistidine intermediate. ATP is bound by residues Tyr-476, Arg-572, and His-601.

The protein belongs to the polyphosphate kinase 1 (PPK1) family. Requires Mg(2+) as cofactor. In terms of processing, an intermediate of this reaction is the autophosphorylated ppk in which a phosphate is covalently linked to a histidine residue through a N-P bond.

It carries out the reaction [phosphate](n) + ATP = [phosphate](n+1) + ADP. In terms of biological role, catalyzes the reversible transfer of the terminal phosphate of ATP to form a long-chain polyphosphate (polyP). This chain is Polyphosphate kinase, found in Acinetobacter baumannii (strain ATCC 17978 / DSM 105126 / CIP 53.77 / LMG 1025 / NCDC KC755 / 5377).